A 248-amino-acid polypeptide reads, in one-letter code: 1-(5-phosphoribosyl)-5-[(5-phosphoribosylamino)methylideneamino] imidazole-4-carboxamide isomerase (248 aa).

The Proton acceptor role is filled by aspartate 8. The Proton donor role is filled by aspartate 129.

This sequence belongs to the HisA/HisF family.

The protein resides in the cytoplasm. The catalysed reaction is 1-(5-phospho-beta-D-ribosyl)-5-[(5-phospho-beta-D-ribosylamino)methylideneamino]imidazole-4-carboxamide = 5-[(5-phospho-1-deoxy-D-ribulos-1-ylimino)methylamino]-1-(5-phospho-beta-D-ribosyl)imidazole-4-carboxamide. Its pathway is amino-acid biosynthesis; L-histidine biosynthesis; L-histidine from 5-phospho-alpha-D-ribose 1-diphosphate: step 4/9. In Rhizobium etli (strain CIAT 652), this protein is 1-(5-phosphoribosyl)-5-[(5-phosphoribosylamino)methylideneamino] imidazole-4-carboxamide isomerase.